A 321-amino-acid chain; its full sequence is Phosphoenolpyruvate transferase (321 aa).

7,8-didemethyl-8-hydroxy-5-deazariboflavin is bound at residue Asp51.

The protein belongs to the CofD family. In terms of assembly, homodimer. It depends on Mg(2+) as a cofactor.

It carries out the reaction enolpyruvoyl-2-diphospho-5'-guanosine + 7,8-didemethyl-8-hydroxy-5-deazariboflavin = dehydro coenzyme F420-0 + GMP + H(+). The protein operates within cofactor biosynthesis; coenzyme F420 biosynthesis. Functionally, catalyzes the transfer of the phosphoenolpyruvate moiety from enoylpyruvoyl-2-diphospho-5'-guanosine (EPPG) to 7,8-didemethyl-8-hydroxy-5-deazariboflavin (FO) with the formation of dehydro coenzyme F420-0 and GMP. The polypeptide is Phosphoenolpyruvate transferase (Kitasatospora aureofaciens (Streptomyces aureofaciens)).